A 278-amino-acid polypeptide reads, in one-letter code: MRLIILDTSDYVGEWSAKYVMKRINDFKPGPSRFFTLGLPTGSTPLGLYRNLIKFHQEGKISFKYVKTFNMDEYVDLPRDHPESYHYFMWHNFFKHIDIDPVNVHILDGNAPDLVAECNAFEDKIKAAGGIELFIGGIGPDGHIAFNEPGSSLVSRTRVKTLAQDTLEANARFFGNDISKVPKQALTVGVGTVMDAREVMILIIGAHKAFALYKAIEEGVNHMWTVSAFQQHPHTIMICDEDATLELRVKTVKYFKALSNVHHKLIEEGSTDVRKLCK.

Asp-72 serves as the catalytic Proton acceptor; for enolization step. Asp-141 acts as the For ring-opening step in catalysis. The active-site Proton acceptor; for ring-opening step is the His-143. Glu-148 (for ring-opening step) is an active-site residue.

The protein belongs to the glucosamine/galactosamine-6-phosphate isomerase family. Homohexamer.

It is found in the cytoplasm. The enzyme catalyses alpha-D-glucosamine 6-phosphate + H2O = beta-D-fructose 6-phosphate + NH4(+). The protein operates within nucleotide-sugar biosynthesis; UDP-N-acetyl-alpha-D-glucosamine biosynthesis; alpha-D-glucosamine 6-phosphate from D-fructose 6-phosphate: step 1/1. Catalyzes the reversible conversion of alpha-D-glucosamine 6-phosphate (GlcN-6P) into beta-D-fructose 6-phosphate (Fru-6P) and ammonium ion, a regulatory reaction step in de novo uridine diphosphate-N-acetyl-alpha-D-glucosamine (UDP-GlcNAc) biosynthesis via hexosamine pathway. The protein is Glucosamine-6-phosphate deaminase (Gnpda1) of Aedes aegypti (Yellowfever mosquito).